The sequence spans 430 residues: Ribosomal protein uS12 methylthiotransferase RimO (430 aa).

The 118-residue stretch at 2–119 (ISVYSISLGC…WPAMLAHALK (118 aa)) folds into the MTTase N-terminal domain. Residues Cys-11, Cys-46, Cys-81, Cys-145, Cys-149, and Cys-152 each contribute to the [4Fe-4S] cluster site. The Radical SAM core domain maps to 131 to 361 (STGPSYAWLK…MEVQAEISEE (231 aa)). The region spanning 364–430 (AVHEGTRQQV…TRTYDLVALA (67 aa)) is the TRAM domain.

Belongs to the methylthiotransferase family. RimO subfamily. Requires [4Fe-4S] cluster as cofactor.

Its subcellular location is the cytoplasm. It catalyses the reaction L-aspartate(89)-[ribosomal protein uS12]-hydrogen + (sulfur carrier)-SH + AH2 + 2 S-adenosyl-L-methionine = 3-methylsulfanyl-L-aspartate(89)-[ribosomal protein uS12]-hydrogen + (sulfur carrier)-H + 5'-deoxyadenosine + L-methionine + A + S-adenosyl-L-homocysteine + 2 H(+). Its function is as follows. Catalyzes the methylthiolation of an aspartic acid residue of ribosomal protein uS12. This is Ribosomal protein uS12 methylthiotransferase RimO from Nitratidesulfovibrio vulgaris (strain ATCC 29579 / DSM 644 / CCUG 34227 / NCIMB 8303 / VKM B-1760 / Hildenborough) (Desulfovibrio vulgaris).